A 1347-amino-acid chain; its full sequence is Protocadherin-11 X-linked (1347 aa).

Positions 1–23 are cleaved as a signal peptide; that stretch reads MDLLSGTYIFAVLLACVVFHSGA. At 24–812 the chain is on the extracellular side; it reads QEKNYTIREE…VSSPTNDYVK (789 aa). Cadherin domains lie at 26-139, 140-249, 250-355, 362-466, 467-570, 571-673, and 677-795; these read KNYT…APLF, PATV…HPVF, KETE…VPSI, NPVN…APVF, TQSF…SPVF, THNE…KPVF, and PSNY…APVT. N-linked (GlcNAc...) asparagine glycans are attached at residues asparagine 27, asparagine 48, and asparagine 54. The N-linked (GlcNAc...) asparagine glycan is linked to asparagine 344. Asparagine 553 is a glycosylation site (N-linked (GlcNAc...) asparagine). N-linked (GlcNAc...) asparagine glycosylation occurs at asparagine 773. A helical membrane pass occupies residues 813-833; that stretch reads ILVAAVAGTITVVVVIFITAV. The Cytoplasmic portion of the chain corresponds to 834-1347; the sequence is VRCRQAPHLK…DSPIMEEHPL (514 aa). Disordered regions lie at residues 1057 to 1091, 1097 to 1116, and 1326 to 1347; these read LPEG…GYPQ, RATP…ESTF, and FTPR…EHPL.

It localises to the cell membrane. Functionally, potential calcium-dependent cell-adhesion protein. In Gorilla gorilla gorilla (Western lowland gorilla), this protein is Protocadherin-11 X-linked (PCDH11X).